Consider the following 216-residue polypeptide: Ras-related protein RabN1 (216 aa).

Position 15-22 (15-22 (GDYNSGKT)) interacts with GTP. An Effector region motif is present at residues 37–44 (TCPSTFDL). GTP is bound by residues 62–66 (DTAGQ) and 128–131 (TKSD). Residue Cys216 is the site of S-geranylgeranyl cysteine attachment.

It belongs to the small GTPase superfamily. Rab family.

Its subcellular location is the cell membrane. The polypeptide is Ras-related protein RabN1 (rabN1) (Dictyostelium discoideum (Social amoeba)).